Consider the following 460-residue polypeptide: Flavin-containing monooxygenase FMO GS-OX-like 9 (460 aa).

20–25 lines the FAD pocket; that stretch reads GAGPAG. 222 to 227 serves as a coordination point for NADP(+); the sequence is GNSMSG.

The protein belongs to the FMO family. Requires FAD as cofactor.

Its function is as follows. Catalyzes the conversion of methylthioalkyl glucosinolates of any chain length into methylsulfinylalkyl glucosinolates. The protein is Flavin-containing monooxygenase FMO GS-OX-like 9 of Arabidopsis thaliana (Mouse-ear cress).